Here is a 544-residue protein sequence, read N- to C-terminus: CTP synthase (544 aa).

Residues 1–265 (MARFIFITGG…DKAVLSAFGL (265 aa)) form an amidoligase domain region. Residue serine 13 coordinates CTP. Position 13 (serine 13) interacts with UTP. 14 to 19 (SLGKGL) contributes to the ATP binding site. Tyrosine 54 lines the L-glutamine pocket. An ATP-binding site is contributed by aspartate 71. Residues aspartate 71 and glutamate 139 each coordinate Mg(2+). CTP contacts are provided by residues 146–148 (DIE), 186–191 (KTKPTQ), and lysine 222. UTP is bound by residues 186–191 (KTKPTQ) and lysine 222. The Glutamine amidotransferase type-1 domain maps to 291 to 543 (TIGVVGKYVG…VAAALKQSRL (253 aa)). Glycine 355 serves as a coordination point for L-glutamine. Cysteine 382 acts as the Nucleophile; for glutamine hydrolysis in catalysis. L-glutamine-binding positions include 383–386 (LGMQ), glutamate 406, and arginine 471. Catalysis depends on residues histidine 516 and glutamate 518.

It belongs to the CTP synthase family. As to quaternary structure, homotetramer.

It catalyses the reaction UTP + L-glutamine + ATP + H2O = CTP + L-glutamate + ADP + phosphate + 2 H(+). The catalysed reaction is L-glutamine + H2O = L-glutamate + NH4(+). It carries out the reaction UTP + NH4(+) + ATP = CTP + ADP + phosphate + 2 H(+). The protein operates within pyrimidine metabolism; CTP biosynthesis via de novo pathway; CTP from UDP: step 2/2. With respect to regulation, allosterically activated by GTP, when glutamine is the substrate; GTP has no effect on the reaction when ammonia is the substrate. The allosteric effector GTP functions by stabilizing the protein conformation that binds the tetrahedral intermediate(s) formed during glutamine hydrolysis. Inhibited by the product CTP, via allosteric rather than competitive inhibition. In terms of biological role, catalyzes the ATP-dependent amination of UTP to CTP with either L-glutamine or ammonia as the source of nitrogen. Regulates intracellular CTP levels through interactions with the four ribonucleotide triphosphates. This chain is CTP synthase, found in Zymomonas mobilis subsp. mobilis (strain ATCC 31821 / ZM4 / CP4).